A 476-amino-acid polypeptide reads, in one-letter code: Neuropeptide-like precursor 1 (476 aa).

Residues 1 to 34 form the signal peptide; it reads MNDAGASIGRHRGCLLLFVALAVAFSSYVEQVES. Val-133 is subject to Valine amide. 2 consecutive propeptides follow at residues 160-232 and 259-476; these read DEAT…NSYF and YVMP…RKNQ. Disordered regions lie at residues 275–298 and 360–385; these read QNDI…DGEV and PEVE…SHPT. Acidic residues predominate over residues 286–297; it reads DDDDDDDDDDGE.

Neuropeptide-like precursor 1-1: Expressed in antennal lobe (AL), corpora cardiaca (CC), corpora allata (CA) and gnathal ganglion (GNG) (at protein level). Expression in AL detected in all animals, in GNG in most animals, expression in CC and CA in few animals (at protein level). Neuropeptide-like precursor 1-2: Expressed in antennal lobe (AL), corpora cardiaca (CC), corpora allata (CA) and gnathal ganglion (GNG) (at protein level). Expression in AL detected in all animals, in GNG in some animals, expression in CC and CA in few animals (at protein level). Neuropeptide-like precursor 1-3: Not expressed in antennal lobe (AL), corpora cardiaca (CC), corpora allata (CA) and gnathal ganglion (GNG) (at protein level). Neuropeptide-like precursor 1-4: Expressed in antennal lobe (AL) and gnathal ganglion (GNG) (at protein level). Expression in AL detected in most animals, in GNG in some animals (at protein level). Not expressed in CC and CA (at protein level). YRVamide: Expressed in antennal lobe (AL), corpora cardiaca (CC), corpora allata (CA) and gnathal ganglion (GNG) (at protein level). Expression in AL and GNG detected in most animals, expression in CC and CA in few animals (at protein level). Extended YRVamide: Expressed in antennal lobe (AL) and gnathal ganglion (GNG) (at protein level). Expression in AL detected in most animals, in GNG in some animals (at protein level). Not expressed in corpora cardiaca (CC) and corpora allata (CA) (at protein level). Neuropeptide-like precursor 1-6: Expressed in antennal lobe (AL), corpora cardiaca (CC), corpora allata (CA) and gnathal ganglion (GNG) (at protein level). Expression in GNG detected in all animals, expression in AL in most animals, in CC and CA in few animals (at protein level). Neuropeptide-like precursor 1-6(1-11): Expressed in antennal lobe (AL) and gnathal ganglion (GNG) in most animals (at protein level). Not expressed in corpora cardiaca (CC) and corpora allata (CA) (at protein level). Neuropeptide-like precursor 1-9: Expressed in antennal lobe (AL) and gnathal ganglion (GNG) (at protein level). Expression in AL detected in all animals in GNG in most (at protein level). Not expressed in corpora cardiaca (CC) and corpora allata (CA) (at protein level).

Its subcellular location is the secreted. The polypeptide is Neuropeptide-like precursor 1 (Agrotis ipsilon (Black cutworm moth)).